The sequence spans 429 residues: 3-phosphoshikimate 1-carboxyvinyltransferase (429 aa).

Positions 22, 23, and 27 each coordinate 3-phosphoshikimate. K22 serves as a coordination point for phosphoenolpyruvate. Phosphoenolpyruvate-binding residues include G93 and R122. Residues S168, S169, Q170, S196, D311, and K338 each coordinate 3-phosphoshikimate. Residue Q170 coordinates phosphoenolpyruvate. Catalysis depends on D311, which acts as the Proton acceptor. Phosphoenolpyruvate is bound by residues R342 and R384.

It belongs to the EPSP synthase family. In terms of assembly, monomer.

Its subcellular location is the cytoplasm. It catalyses the reaction 3-phosphoshikimate + phosphoenolpyruvate = 5-O-(1-carboxyvinyl)-3-phosphoshikimate + phosphate. It functions in the pathway metabolic intermediate biosynthesis; chorismate biosynthesis. In terms of biological role, catalyzes the transfer of the enolpyruvyl moiety of phosphoenolpyruvate (PEP) to the 5-hydroxyl of shikimate-3-phosphate (S3P) to produce enolpyruvyl shikimate-3-phosphate and inorganic phosphate. In Methanocaldococcus jannaschii (strain ATCC 43067 / DSM 2661 / JAL-1 / JCM 10045 / NBRC 100440) (Methanococcus jannaschii), this protein is 3-phosphoshikimate 1-carboxyvinyltransferase.